Here is a 392-residue protein sequence, read N- to C-terminus: MPILKMSELDLAGKRVLIREDLNVPLKNGEITDDTRIRASLPSIQQAMQAGAKVMVMSHLGRPTEGEFDAAFSLAPVAGYLSHLLGQEVRLAPDWLEGMAVEKGQLVLCENVRFNRGEKKNDEALAKKMAALCDIYVMDAFGSAHRAQASTHGVAKYAPVACAGPLLAGELEALGKALENPARPLVAIVGGSKVSTKLTVLESLSQVVDQLIVGGGIANTFIAAADYNVGKSLYEADLVGTAKQLRTAAQEGGGDIPLPVDVVCGQEFSENAEAVLKRIGKVTDEDMIFDIGPETSKHFAEILKGAGTIVWNGPVGVFEFDQFGEGTKALALAIAESPAFSIAGGGDTLAAVAKYGVGDQVSYISTGGGAFLEFLEGKQLPAVAILEERASQ.

Residues 21–23, Arg36, 59–62, Arg113, and Arg146 each bind substrate; these read DLN and HLGR. ATP is bound by residues Lys197, Glu319, and 345–348; that span reads GGDT.

The protein belongs to the phosphoglycerate kinase family. Monomer.

It localises to the cytoplasm. The catalysed reaction is (2R)-3-phosphoglycerate + ATP = (2R)-3-phospho-glyceroyl phosphate + ADP. Its pathway is carbohydrate degradation; glycolysis; pyruvate from D-glyceraldehyde 3-phosphate: step 2/5. This Nitrosococcus oceani (strain ATCC 19707 / BCRC 17464 / JCM 30415 / NCIMB 11848 / C-107) protein is Phosphoglycerate kinase.